We begin with the raw amino-acid sequence, 213 residues long: Adenylate kinase (213 aa).

ATP is bound at residue 10–15; it reads GAGKGT. The interval 30–59 is NMP; it reads STGDMFRAAIKEGTEMGKKAKEYMDKGALV. Residues T31, R36, 57–59, 85–88, and Q92 each bind AMP; these read ALV and GFPR. An LID region spans residues 126–163; that stretch reads GRRVCKNCGASYHVIFNPPQAEGKCNSCNGELYQRSDD. Residue R127 participates in ATP binding. 2 residues coordinate Zn(2+): C130 and C133. Residue 136 to 137 participates in ATP binding; that stretch reads SY. The Zn(2+) site is built by C150 and C153. Residues R160 and R171 each coordinate AMP. Q199 serves as a coordination point for ATP.

Belongs to the adenylate kinase family. In terms of assembly, monomer.

It is found in the cytoplasm. The enzyme catalyses AMP + ATP = 2 ADP. It participates in purine metabolism; AMP biosynthesis via salvage pathway; AMP from ADP: step 1/1. Functionally, catalyzes the reversible transfer of the terminal phosphate group between ATP and AMP. Plays an important role in cellular energy homeostasis and in adenine nucleotide metabolism. This chain is Adenylate kinase, found in Desulforamulus reducens (strain ATCC BAA-1160 / DSM 100696 / MI-1) (Desulfotomaculum reducens).